The primary structure comprises 114 residues: Large ribosomal subunit protein uL18 (114 aa).

This sequence belongs to the universal ribosomal protein uL18 family. As to quaternary structure, part of the 50S ribosomal subunit; part of the 5S rRNA/L5/L18/L25 subcomplex. Contacts the 5S and 23S rRNAs.

Its function is as follows. This is one of the proteins that bind and probably mediate the attachment of the 5S RNA into the large ribosomal subunit, where it forms part of the central protuberance. In Parabacteroides distasonis (strain ATCC 8503 / DSM 20701 / CIP 104284 / JCM 5825 / NCTC 11152), this protein is Large ribosomal subunit protein uL18.